The primary structure comprises 400 residues: Iron(III) enterobactin esterase (400 aa).

The protein belongs to the Fes family.

The protein resides in the cytoplasm. It carries out the reaction Fe(III)-enterobactin + 3 H2O + H(+) = Fe(III)-[N-(2,3-dihydroxybenzoyl)-L-serine] + 2 N-(2,3-dihydroxybenzoyl)-L-serine. The catalysed reaction is Fe(III)-enterobactin + H2O = Fe(III)-[N-(2,3-dihydroxybenzoyl)-L-serine]3 + H(+). The enzyme catalyses Fe(III)-[N-(2,3-dihydroxybenzoyl)-L-serine]3 + H2O + H(+) = Fe(III)-[N-(2,3-dihydroxybenzoyl)-L-serine]2 + N-(2,3-dihydroxybenzoyl)-L-serine. It catalyses the reaction Fe(III)-[N-(2,3-dihydroxybenzoyl)-L-serine]2 + H2O + H(+) = Fe(III)-[N-(2,3-dihydroxybenzoyl)-L-serine] + N-(2,3-dihydroxybenzoyl)-L-serine. It carries out the reaction enterobactin + 3 H2O = 3 N-(2,3-dihydroxybenzoyl)-L-serine + 2 H(+). Catalyzes the hydrolysis of ferric enterobactin (Fe-Ent). Is responsible for the release of iron from ferric enterobactin. Also catalyzes the hydrolysis of iron-free enterobactin (Ent). Hydrolyzes ferric monoglucosyl-C-Ent (Fe-MGE) poorly and does not hydrolyze ferric diglucosyl-C-Ent (Fe-DGE) or ferric triglucosyl-C-Ent (Fe-TGE) at all. Also hydrolyzes apo MGE, but catalyzes the hydrolysis of apo DGE very poorly, and does not process apo TGE at all. The catalytic efficiency for processing Fe-Ent is much higher than that for apo Ent, suggesting that Fe-Ent is the physiological substrate. The polypeptide is Iron(III) enterobactin esterase (Escherichia coli O6:H1 (strain CFT073 / ATCC 700928 / UPEC)).